Here is a 200-residue protein sequence, read N- to C-terminus: TATA-box-binding protein (200 aa).

2 tandem repeats follow at residues 25–101 and 115–192.

The protein belongs to the TBP family. In terms of assembly, belongs to the TFIID complex together with the TBP-associated factors (TAFs). Binds DNA as monomer.

It is found in the nucleus. Its function is as follows. General transcription factor that functions at the core of the DNA-binding multiprotein factor TFIID. Binding of TFIID to the TATA box is the initial transcriptional step of the pre-initiation complex (PIC), playing a role in the activation of eukaryotic genes transcribed by RNA polymerase II. The chain is TATA-box-binding protein (TBP) from Solanum tuberosum (Potato).